A 247-amino-acid chain; its full sequence is Geranylgeranylglyceryl phosphate synthase (247 aa).

Residues D23 and S52 each coordinate Mg(2+). Residues 171-177 (YLEAGSG), 203-204 (GG), and 225-226 (GT) each bind sn-glycerol 1-phosphate.

This sequence belongs to the GGGP/HepGP synthase family. Group II subfamily. The cofactor is Mg(2+).

It is found in the cytoplasm. The enzyme catalyses sn-glycerol 1-phosphate + (2E,6E,10E)-geranylgeranyl diphosphate = sn-3-O-(geranylgeranyl)glycerol 1-phosphate + diphosphate. The protein operates within membrane lipid metabolism; glycerophospholipid metabolism. In terms of biological role, prenyltransferase that catalyzes the transfer of the geranylgeranyl moiety of geranylgeranyl diphosphate (GGPP) to the C3 hydroxyl of sn-glycerol-1-phosphate (G1P). This reaction is the first ether-bond-formation step in the biosynthesis of archaeal membrane lipids. The chain is Geranylgeranylglyceryl phosphate synthase from Methanosarcina barkeri (strain Fusaro / DSM 804).